Here is a 416-residue protein sequence, read N- to C-terminus: cAMP-dependent protein kinase type II-beta regulatory subunit (416 aa).

The tract at residues 2–151 (SIEIPAGLTE…RLQEACKDIL (150 aa)) is dimerization and phosphorylation. The interval 53–97 (HEGRTWGDAGAAAGGGTPSKGVNFAEEPMRSDSENGEEEEAAEAG) is disordered. A Phosphothreonine modification is found at Thr-69. Ser-83, Ser-85, and Ser-112 each carry phosphoserine. Residues 152–273 (LFKN…ESLP), Glu-221, Arg-230, 274–416 (FLKS…EPTA), Glu-350, and Arg-359 contribute to the 3',5'-cyclic AMP site.

The protein belongs to the cAMP-dependent kinase regulatory chain family. As to quaternary structure, the inactive form of the enzyme is composed of two regulatory chains and two catalytic chains. Activation by cAMP produces two active catalytic monomers and a regulatory dimer that binds four cAMP molecules. Interacts with PRKACA and PRKACB. Interacts with the phosphorylated form of PJA2. Forms a complex composed of PRKAR2B, GSK3B and GSKIP through GSKIP interaction; facilitates PKA-induced phosphorylation and regulates GSK3B activity. Phosphorylated by the activated catalytic chain. Four types of regulatory chains are found: I-alpha, I-beta, II-alpha, and II-beta. Their expression varies among tissues and is in some cases constitutive and in others inducible. Brain. Present in a few pyramidal neurons and mostly in mossy fibers. Colocalizes with PJA2 in dentate granule cells and at postsynaptic sites of primary hippocampal neurons.

It is found in the cytoplasm. Its subcellular location is the cell membrane. Functionally, regulatory subunit of the cAMP-dependent protein kinases involved in cAMP signaling in cells. Type II regulatory chains mediate membrane association by binding to anchoring proteins, including the MAP2 kinase. This is cAMP-dependent protein kinase type II-beta regulatory subunit (Prkar2b) from Rattus norvegicus (Rat).